The chain runs to 121 residues: ATP synthase epsilon chain (121 aa).

Belongs to the ATPase epsilon chain family. In terms of assembly, F-type ATPases have 2 components, CF(1) - the catalytic core - and CF(0) - the membrane proton channel. CF(1) has five subunits: alpha(3), beta(3), gamma(1), delta(1), epsilon(1). CF(0) has three main subunits: a, b and c.

The protein resides in the cell membrane. Its function is as follows. Produces ATP from ADP in the presence of a proton gradient across the membrane. The protein is ATP synthase epsilon chain of Mycobacterium sp. (strain JLS).